A 65-amino-acid polypeptide reads, in one-letter code: KEGYPVGRDGCKISCVINNNFCKVECQAKWRQSDGYCYFWGLSCYCTNLPDDAQVWDSSTNKCGG.

The 64-residue stretch at 1-64 (KEGYPVGRDG…VWDSSTNKCG (64 aa)) folds into the LCN-type CS-alpha/beta domain. 4 disulfide bridges follow: C11/C63, C15/C37, C22/C44, and C26/C46.

The protein belongs to the long (4 C-C) scorpion toxin superfamily. Sodium channel inhibitor family. Beta subfamily. Expressed by the venom gland.

The protein localises to the secreted. In terms of biological role, beta toxins bind voltage-independently at site-4 of sodium channels (Nav) and shift the voltage of activation toward more negative potentials thereby affecting sodium channel activation and promoting spontaneous and repetitive firing. The protein is Putative beta-neurotoxin RjAa7 of Rhopalurus junceus (Caribbean blue scorpion).